Reading from the N-terminus, the 557-residue chain is Carboxypeptidase Y homolog A (557 aa).

Residues 1–17 (MRVLPAAMLVGAATAAV) form the signal peptide. Residues 18–138 (PPFQQVLGGN…KLEAYDLRVK (121 aa)) constitute a propeptide that is removed on maturation. Intrachain disulfides connect Cys193–Cys433, Cys327–Cys341, Cys351–Cys374, Cys358–Cys367, and Cys396–Cys403. A glycan (N-linked (GlcNAc...) asparagine) is linked at Asn224. Ser280 is an active-site residue. The active site involves Asp472. The N-linked (GlcNAc...) asparagine glycan is linked to Asn523. His534 is an active-site residue.

This sequence belongs to the peptidase S10 family.

Its subcellular location is the vacuole. The enzyme catalyses Release of a C-terminal amino acid with broad specificity.. In terms of biological role, vacuolar carboxypeptidase involved in degradation of small peptides. Digests preferentially peptides containing an aliphatic or hydrophobic residue in P1' position, as well as methionine, leucine or phenylalanine in P1 position of ester substrate. The protein is Carboxypeptidase Y homolog A (cpyA) of Aspergillus niger (strain ATCC MYA-4892 / CBS 513.88 / FGSC A1513).